A 1378-amino-acid chain; its full sequence is Protein CLASP-1 (1378 aa).

The stretch at 168-206 (LIPQLCRLTNDPNSEVRDVSTQCLIDLMVYGGKPIVAKI) is one HEAT 1 repeat. Disordered stretches follow at residues 231–254 (RGDL…RNSL), 266–325 (IHPS…TRSS), and 590–725 (MLRD…HQTP). Composition is skewed to low complexity over residues 269-283 (SAST…RLST) and 610-619 (NQKQQPNQQN). Composition is skewed to polar residues over residues 620–630 (ISQKFLSQRSA) and 637–648 (IQLSVKPQTTAI). Low complexity predominate over residues 664 to 676 (SSTSTSFSAVRSS). Over residues 677 to 690 (GYGQNQSTTPNRAK) the composition is skewed to polar residues. A compositionally biased stretch (low complexity) spans 704–721 (TNGNNNNKSSSSSPSTST). A coiled-coil region spans residues 740–767 (ASLTQEQANCLQNAMNTAKDEMSKNNED). Residues 775 to 784 (IRKTPPKEVP) are compositionally biased toward basic and acidic residues. A disordered region spans residues 775–823 (IRKTPPKEVPRSYNNSPFKPSNLDSSVHRSYNNNSPFRPSSGSVGSGSN). A compositionally biased stretch (polar residues) spans 786-812 (SYNNSPFKPSNLDSSVHRSYNNNSPFR). One copy of the HEAT 2 repeat lies at 1305–1341 (HLIVNDVAPCFVTAYESMSSTVRKCAVFGLVALVQRV).

The protein belongs to the CLASP family.

Its subcellular location is the cytoplasm. The protein resides in the cytoskeleton. Microtubule plus-end tracking protein that promotes the stabilization of dynamic microtubules. Operates redundantly with cls-2 and cls-3 in regulating microtubule processes which position the spindle during asymmetric cell division. This Caenorhabditis elegans protein is Protein CLASP-1 (cls-1).